The following is a 393-amino-acid chain: Probable pectinesterase 8 (393 aa).

A signal peptide spans 1 to 19 (MKIISLSISIGIAIIAVLA). N-linked (GlcNAc...) asparagine glycans are attached at residues Asn100, Asn113, Asn140, Asn156, and Asn163. Thr165 is a substrate binding site. Residue Asn182 is glycosylated (N-linked (GlcNAc...) asparagine). Gln200 is a substrate binding site. Asp223 serves as the catalytic Proton donor. Catalysis depends on Asp244, which acts as the Nucleophile. Residue Asn295 is glycosylated (N-linked (GlcNAc...) asparagine). Arg308 contacts substrate. Residues Asn350, Asn369, and Asn378 are each glycosylated (N-linked (GlcNAc...) asparagine).

The protein belongs to the pectinesterase family. As to expression, expressed in siliques.

It localises to the secreted. The protein resides in the cell wall. It catalyses the reaction [(1-&gt;4)-alpha-D-galacturonosyl methyl ester](n) + n H2O = [(1-&gt;4)-alpha-D-galacturonosyl](n) + n methanol + n H(+). It participates in glycan metabolism; pectin degradation; 2-dehydro-3-deoxy-D-gluconate from pectin: step 1/5. Its function is as follows. Acts in the modification of cell walls via demethylesterification of cell wall pectin. The chain is Probable pectinesterase 8 (PME8) from Arabidopsis thaliana (Mouse-ear cress).